The following is a 250-amino-acid chain: MPGSIPLIGERFPEMEVTTDHGVIKLPDHYVSQGKWFVLFSHPADFTPVCTTEFVSFARRYEDFQRLGVDLIGLSVDSVFSHIKWKEWIERHIGVRIPFPIIADPQGTVARRLGLLHAESATHTVRGVFIVDARGVIRTMLYYPMELGRLVDEILRIVKALKLGDSLKRAVPADWPNNEIIGEGLIVPPPTTEDQARARMESGQYRCLDWWFCWDTPASRDDVEEARRYLRRAAEKPAKLLYEEARTHLH.

A Thioredoxin domain is found at 6–163 (PLIGERFPEM…ILRIVKALKL (158 aa)). C50 functions as the Cysteine sulfenic acid (-SOH) intermediate in the catalytic mechanism. R126 lines the substrate pocket. C207 and C213 form a disulfide bridge.

This sequence belongs to the peroxiredoxin family. Prx6 subfamily. Homodecamer. Pentamer of dimers that assemble into a ring structure.

It localises to the cytoplasm. The enzyme catalyses a hydroperoxide + [thioredoxin]-dithiol = an alcohol + [thioredoxin]-disulfide + H2O. Its function is as follows. Thiol-specific peroxidase that catalyzes the reduction of hydrogen peroxide and organic hydroperoxides to water and alcohols, respectively. Plays a role in cell protection against oxidative stress by detoxifying peroxides. In Aeropyrum pernix (strain ATCC 700893 / DSM 11879 / JCM 9820 / NBRC 100138 / K1), this protein is Peroxiredoxin.